Consider the following 331-residue polypeptide: UPF0324 membrane protein SAS0317 (331 aa).

A run of 11 helical transmembrane segments spans residues 9 to 26 (FMIGLTLTFIVALFSFLA), 31 to 48 (ILDKVGALTIAILIAILY), 69 to 88 (LLRFAIILYGLKLNIFDIIG), 93 to 115 (LLAIDVGVVIFSIVMMLFVNKLL), 122 to 144 (ALLLGVGTGVCGAAAIAAVAPIF), 154 to 176 (SIGIIALIGTIFSLIYTAIYAIF), 183 to 202 (YGAWSGVSLHEIAHVVLAGG), 217 to 234 (LGRVFLLIPLTIVLILIM), 247 to 269 (ISIPYFLIGFVIMALVNTYVTIP), 273 to 295 (LNILNTVSTICLLMAMVALGLNV), and 308 to 330 (LMTIIITSICLSSLAFIVVHWLY).

This sequence belongs to the UPF0324 family.

It is found in the cell membrane. The sequence is that of UPF0324 membrane protein SAS0317 from Staphylococcus aureus (strain MSSA476).